A 247-amino-acid chain; its full sequence is MAAEADGPLKRLLVPILLPEKCYDQLFVQWDLLHVPCLKILLSKGLGLGIVAGSLLVKLPQVFKILGAKSAEGLSLQSVMLELVALTGTMVYSITNNFPFSSWGEALFLMLQTITICFLVMHYRGQTVKGVAFLACYGLVLLVLLSPLTPLTVVTLLQASNVPAVVVGRLLQAATNYHNGHTGQLSAITVFLLFGGSLARIFTSIQETGDPLMAGTFVVSSLCNGLIAAQLLFYWNAKPPHKQKKAQ.

Ala2 bears the N-acetylalanine mark. 7 consecutive transmembrane segments (helical) span residues 37–57 (CLKI…SLLV), 74–94 (LSLQ…VYSI), 100–120 (FSSW…CFLV), 128–145 (VKGV…LVLL), 151–171 (LTVV…GRLL), 185–205 (LSAI…FTSI), and 213–233 (MAGT…QLLF). The 67-residue stretch at 39–105 (KILLSKGLGL…NNFPFSSWGE (67 aa)) folds into the PQ-loop 1 domain. A PQ-loop 2 domain is found at 159-216 (ASNVPAVVVGRLLQAATNYHNGHTGQLSAITVFLLFGGSLARIFTSIQETGDPLMAGT).

This sequence belongs to the MPDU1 (TC 2.A.43.3) family.

The protein localises to the membrane. Required for normal utilization of mannose-dolichol phosphate (Dol-P-Man) in the synthesis of N-linked and O-linked oligosaccharides and GPI anchors. The polypeptide is Mannose-P-dolichol utilization defect 1 protein (MPDU1) (Homo sapiens (Human)).